We begin with the raw amino-acid sequence, 355 residues long: C-C chemokine receptor type 1 (355 aa).

The Extracellular segment spans residues 1 to 34 (METPNTTEDYDTTTEFDYGDATPCQKVNERAFGA). N-linked (GlcNAc...) asparagine glycosylation is present at asparagine 5. 2 disulfide bridges follow: cysteine 24/cysteine 273 and cysteine 106/cysteine 183. Residues 35 to 60 (QLLPPLYSLVFVIGLVGNILVVLVLV) traverse the membrane as a helical segment. Residues 61–64 (QYKR) lie on the Cytoplasmic side of the membrane. The helical transmembrane segment at 65-91 (LKNMTSIYLLNLAISDLLFLFTLPFWI) threads the bilayer. Over 92 to 107 (DYKLKDDWVFGDAMCK) the chain is Extracellular. Residues 108 to 129 (ILSGFYYTGLYSEIFFIILLTI) traverse the membrane as a helical segment. Residues 130–146 (DRYLAIVHAVFALRART) lie on the Cytoplasmic side of the membrane. The helical transmembrane segment at 147 to 171 (VTFGVITSIIIWALAILASMPGLYF) threads the bilayer. The Extracellular portion of the chain corresponds to 172 to 197 (SKTQWEFTHHTCSLHFPHESLREWKL). A helical membrane pass occupies residues 198–223 (FQALKLNLFGLVLPLLVMIICYTGII). Residues 224–239 (KILLRRPNEKKSKAVR) are Cytoplasmic-facing. The helical transmembrane segment at 240–264 (LIFVIMIIFFLFWTPYNLTILISVF) threads the bilayer. The Extracellular portion of the chain corresponds to 265-281 (QDFLFTHECEQSRHLDL). The chain crosses the membrane as a helical span at residues 282-305 (AVQVTEVIAYTHCCVNPVIYAFVG). The Cytoplasmic portion of the chain corresponds to 306–355 (ERFRKYLRQLFHRRVAVHLVKWLPFLSVDRLERVSSTSPSTGEHELSAGF).

This sequence belongs to the G-protein coupled receptor 1 family. As to quaternary structure, interacts with CREB3. Interacts with CCL3. Interacts with CCL15. Interacts with CCL23. Interacts with GNAI1. Interacts with PF4/CXCL4. Widely expressed in different hematopoietic cells.

It is found in the cell membrane. Functionally, chemokine receptor that plays a crucial role in regulating immune cell migration, inflammation, and immune responses. Contributes to the inflammatory response by recruiting immune cells, such as monocytes, macrophages, T-cells, and dendritic cells, to sites of inflammation for the clearance of pathogens and the resolution of tissue damage. When activated by its ligands including CCL3, CCL5-9, CCL13-16 and CCL23, triggers a signaling cascade within immune cells, leading to their migration towards the source of the chemokine. For example, mediates neutrophil migration after activation by CCL3 leading to the sequential release of TNF-alpha and leukotriene B4. Also mediates monocyte migration upon CXCL4 binding. Activation by CCL5 results in neuroinflammation through the ERK1/2 signaling pathway. The polypeptide is C-C chemokine receptor type 1 (CCR1) (Homo sapiens (Human)).